We begin with the raw amino-acid sequence, 887 residues long: Alanine--tRNA ligase (887 aa).

Residues His581, His585, Cys683, and His687 each coordinate Zn(2+).

It belongs to the class-II aminoacyl-tRNA synthetase family. Requires Zn(2+) as cofactor.

The protein resides in the cytoplasm. It catalyses the reaction tRNA(Ala) + L-alanine + ATP = L-alanyl-tRNA(Ala) + AMP + diphosphate. Functionally, catalyzes the attachment of alanine to tRNA(Ala) in a two-step reaction: alanine is first activated by ATP to form Ala-AMP and then transferred to the acceptor end of tRNA(Ala). Also edits incorrectly charged Ser-tRNA(Ala) and Gly-tRNA(Ala) via its editing domain. The sequence is that of Alanine--tRNA ligase from Ehrlichia chaffeensis (strain ATCC CRL-10679 / Arkansas).